Consider the following 330-residue polypeptide: MHFIDEVKIYIKGGNGGNGCVSFHREKFIDRGGPDGGDGGRGGSVIFRSNHHLNTLVNYRYKQHFTAENGENGKDSNRSGKSGKSLVLDVPIGTQIFSEDGNILFYDFTVDDQSFEIIKGGSGGLGNSHFKSSVNQAPRKRTEGEIAEEMWIHLSLKLLSDVGLVGLPNAGKSTFLSVVTAAKPKIADYPFTTLVPNLGVVYVDDEEFVIADIPGLIEGAHQGHGLGDKFLKHIERCNVLIHLIDGSSNDVVADYNTVRLELESYSDYLKNKIETICLNKCDVLTDEEIQEKINKLQKVTNKEVFPISTCTNAGVNKIVKLALETIKNQE.

The 159-residue stretch at Met1–Leu159 folds into the Obg domain. In terms of domain architecture, OBG-type G spans Ser160 to Lys327. Residues Gly166–Ser173, Phe191–Val195, Asp212–Gly215, Asn279–Asp282, and Ser308–Cys310 each bind GTP. Mg(2+) is bound by residues Ser173 and Thr193.

This sequence belongs to the TRAFAC class OBG-HflX-like GTPase superfamily. OBG GTPase family. In terms of assembly, monomer. It depends on Mg(2+) as a cofactor.

It is found in the cytoplasm. In terms of biological role, an essential GTPase which binds GTP, GDP and possibly (p)ppGpp with moderate affinity, with high nucleotide exchange rates and a fairly low GTP hydrolysis rate. Plays a role in control of the cell cycle, stress response, ribosome biogenesis and in those bacteria that undergo differentiation, in morphogenesis control. The polypeptide is GTPase Obg (Rickettsia rickettsii (strain Iowa)).